The primary structure comprises 364 residues: Anthranilate N-methyltransferase (364 aa).

The segment at 1–20 (MGSLSESHTQYKHGVEVEED) is disordered. S-adenosyl-L-methionine-binding residues include glycine 209, aspartate 232, methionine 253, and lysine 266. The Proton acceptor role is filled by histidine 270.

Belongs to the class I-like SAM-binding methyltransferase superfamily. Cation-independent O-methyltransferase family. COMT subfamily. As to quaternary structure, homodimer. Expressed in leaves, flowers, stems and roots. Detected in the vascular tissues in stems, in the rhizodermis or the endodermis of roots, in the inside of carpels, in the central vascular bundles of the syncarp ovary and in the secretory oil glands located around the outer ovary wall.

The catalysed reaction is anthranilate + S-adenosyl-L-methionine = N-methylanthranilate + S-adenosyl-L-homocysteine + H(+). Inhibited by Ca(2+), Co(2+), Fe(2+), Fe(3+), Cu(2+) or Zn(2+). No effect of Mg(2+). In terms of biological role, involved in the biosynthesis of acridine alkaloids. N-methyltransferase with a strict substrate specificity for anthranilate. No activity with anthranilic acid methyl ester, anthraniloyl CoA, 3- or 4-amino-benzoic acid, salicylic acid, catechol, eugenol, caffeic acid, quercetin, theobromin, theophyllin, putrescine and nicotinic acid among others. The sequence is that of Anthranilate N-methyltransferase from Ruta graveolens (Common rue).